Reading from the N-terminus, the 353-residue chain is Nicotinate-nucleotide--dimethylbenzimidazole phosphoribosyltransferase (353 aa).

Glu-319 functions as the Proton acceptor in the catalytic mechanism.

Belongs to the CobT family.

It catalyses the reaction 5,6-dimethylbenzimidazole + nicotinate beta-D-ribonucleotide = alpha-ribazole 5'-phosphate + nicotinate + H(+). It participates in nucleoside biosynthesis; alpha-ribazole biosynthesis; alpha-ribazole from 5,6-dimethylbenzimidazole: step 1/2. Functionally, catalyzes the synthesis of alpha-ribazole-5'-phosphate from nicotinate mononucleotide (NAMN) and 5,6-dimethylbenzimidazole (DMB). This chain is Nicotinate-nucleotide--dimethylbenzimidazole phosphoribosyltransferase, found in Chlorobaculum tepidum (strain ATCC 49652 / DSM 12025 / NBRC 103806 / TLS) (Chlorobium tepidum).